The following is a 380-amino-acid chain: Cytochrome b (380 aa).

A run of 4 helical transmembrane segments spans residues 33–53 (FGSLLGLCLATQILTGLFLAM), 77–98 (WLIRNIHANGASFFFICIYMHI), 113–133 (WNIGVVLLLLTMMTAFVGYVL), and 178–198 (FFAFHFLFPFVIAAATVLHLL). Residues H83 and H97 each contribute to the heme b site. H182 and H196 together coordinate heme b. H201 provides a ligand contact to a ubiquinone. 4 helical membrane passes run 226–246 (YKDLLGFVAMLLGLTSLALFA), 288–308 (LGGVLALLFSILVLMVVPILH), 320–340 (LTQFLFWALVADMLILTWIGG), and 347–367 (FIIIGQVASVIYFTIFLVLSP).

The protein belongs to the cytochrome b family. In terms of assembly, the cytochrome bc1 complex contains 3 respiratory subunits (MT-CYB, CYC1 and UQCRFS1), 2 core proteins (UQCRC1 and UQCRC2) and probably 6 low-molecular weight proteins. It depends on heme b as a cofactor.

The protein resides in the mitochondrion inner membrane. Functionally, component of the ubiquinol-cytochrome c reductase complex (complex III or cytochrome b-c1 complex) that is part of the mitochondrial respiratory chain. The b-c1 complex mediates electron transfer from ubiquinol to cytochrome c. Contributes to the generation of a proton gradient across the mitochondrial membrane that is then used for ATP synthesis. This chain is Cytochrome b (mt-cyb), found in Oncorhynchus mykiss (Rainbow trout).